Reading from the N-terminus, the 343-residue chain is N-acetyl-gamma-glutamyl-phosphate reductase (343 aa).

Residue cysteine 152 is part of the active site.

The protein belongs to the NAGSA dehydrogenase family. Type 1 subfamily.

It is found in the cytoplasm. It carries out the reaction N-acetyl-L-glutamate 5-semialdehyde + phosphate + NADP(+) = N-acetyl-L-glutamyl 5-phosphate + NADPH + H(+). The protein operates within amino-acid biosynthesis; L-arginine biosynthesis; N(2)-acetyl-L-ornithine from L-glutamate: step 3/4. In terms of biological role, catalyzes the NADPH-dependent reduction of N-acetyl-5-glutamyl phosphate to yield N-acetyl-L-glutamate 5-semialdehyde. This Methanopyrus kandleri (strain AV19 / DSM 6324 / JCM 9639 / NBRC 100938) protein is N-acetyl-gamma-glutamyl-phosphate reductase.